The primary structure comprises 201 residues: 3-isopropylmalate dehydratase small subunit (201 aa).

Belongs to the LeuD family. LeuD type 1 subfamily. Heterodimer of LeuC and LeuD.

The enzyme catalyses (2R,3S)-3-isopropylmalate = (2S)-2-isopropylmalate. The protein operates within amino-acid biosynthesis; L-leucine biosynthesis; L-leucine from 3-methyl-2-oxobutanoate: step 2/4. Its function is as follows. Catalyzes the isomerization between 2-isopropylmalate and 3-isopropylmalate, via the formation of 2-isopropylmaleate. This Parvibaculum lavamentivorans (strain DS-1 / DSM 13023 / NCIMB 13966) protein is 3-isopropylmalate dehydratase small subunit.